The primary structure comprises 288 residues: Transposase InsF for insertion sequence IS3fB (288 aa).

The Integrase catalytic domain occupies 124–287; that stretch reads YASGPNQKWA…SPEQFENQNL (164 aa).

Belongs to the transposase IS3/IS150/IS904 family.

Its function is as follows. Involved in the transposition of the insertion sequence IS3. The chain is Transposase InsF for insertion sequence IS3fB (insF7) from Escherichia coli (strain K12).